We begin with the raw amino-acid sequence, 264 residues long: Glutamate racemase (264 aa).

Substrate is bound by residues 10 to 11 (DS) and 42 to 43 (YG). Cys-73 (proton donor/acceptor) is an active-site residue. 74-75 (NT) lines the substrate pocket. Cys-183 functions as the Proton donor/acceptor in the catalytic mechanism. Substrate is bound at residue 184–185 (TH).

Belongs to the aspartate/glutamate racemases family.

The enzyme catalyses L-glutamate = D-glutamate. The protein operates within cell wall biogenesis; peptidoglycan biosynthesis. Provides the (R)-glutamate required for cell wall biosynthesis. In Streptococcus pyogenes serotype M49 (strain NZ131), this protein is Glutamate racemase.